The primary structure comprises 322 residues: Sideroflexin-1 (322 aa).

Ser-2 is modified (N-acetylserine). The Mitochondrial matrix segment spans residues 2–102 (SGEVPPNINI…MSAQVPMNMT (101 aa)). The chain crosses the membrane as a helical span at residues 103–120 (ITGCMMTFYRTTPAVLFW). The Mitochondrial intermembrane segment spans residues 121–146 (QWINQSFNAVVNYTNRSGDAPLTVNE). Residues 147–167 (LGTAYVSATTGAVATALGLNA) traverse the membrane as a helical segment. Over 168–174 (LTKHVSP) the chain is Mitochondrial matrix. A helical membrane pass occupies residues 175–195 (LIGRFVPFAAVAAANCINIPL). At 196 to 228 (MRQRELKVGIPVTDENGTRLGESTNAAKQAITQ) the chain is on the mitochondrial intermembrane side. Residues 229–249 (VVISRILMAAPGMAIPPFIMN) traverse the membrane as a helical segment. The Mitochondrial matrix segment spans residues 250 to 266 (TLEKKAFLKRFPWMSAP). Residues 267 to 287 (IQVTLVGFCLVFATPLCCALF) traverse the membrane as a helical segment. Residues 288–322 (PQKSSMSVTSLEDDLQASIQKSHPELRRVYFNKGL) lie on the Mitochondrial intermembrane side of the membrane.

Belongs to the sideroflexin family.

Its subcellular location is the mitochondrion inner membrane. It carries out the reaction L-serine(in) = L-serine(out). It catalyses the reaction L-alanine(in) = L-alanine(out). The catalysed reaction is L-cysteine(in) = L-cysteine(out). Its function is as follows. Amino acid transporter importing serine, an essential substrate of the mitochondrial branch of the one-carbon pathway, into mitochondria. Mitochondrial serine is then converted to glycine and formate, which exits to the cytosol where it is used to generate the charged folates that serve as one-carbon donors. May also transport other amino acids including alanine and cysteine. The chain is Sideroflexin-1 (Sfxn1) from Rattus norvegicus (Rat).